The chain runs to 273 residues: Dermonecrotic toxin LsaSicTox-alphaIB1aii (273 aa).

Residue histidine 5 is part of the active site. Mg(2+) is bound by residues glutamate 25 and aspartate 27. The active-site Nucleophile is histidine 41. 2 disulfide bridges follow: cysteine 45–cysteine 51 and cysteine 47–cysteine 190. Aspartate 85 lines the Mg(2+) pocket.

This sequence belongs to the arthropod phospholipase D family. Class II subfamily. Mg(2+) serves as cofactor. Expressed by the venom gland.

It localises to the secreted. The enzyme catalyses an N-(acyl)-sphingosylphosphocholine = an N-(acyl)-sphingosyl-1,3-cyclic phosphate + choline. It catalyses the reaction an N-(acyl)-sphingosylphosphoethanolamine = an N-(acyl)-sphingosyl-1,3-cyclic phosphate + ethanolamine. The catalysed reaction is a 1-acyl-sn-glycero-3-phosphocholine = a 1-acyl-sn-glycero-2,3-cyclic phosphate + choline. It carries out the reaction a 1-acyl-sn-glycero-3-phosphoethanolamine = a 1-acyl-sn-glycero-2,3-cyclic phosphate + ethanolamine. In terms of biological role, dermonecrotic toxins cleave the phosphodiester linkage between the phosphate and headgroup of certain phospholipids (sphingolipid and lysolipid substrates), forming an alcohol (often choline) and a cyclic phosphate. This toxin acts on sphingomyelin (SM). It may also act on ceramide phosphoethanolamine (CPE), lysophosphatidylcholine (LPC) and lysophosphatidylethanolamine (LPE), but not on lysophosphatidylserine (LPS), and lysophosphatidylglycerol (LPG). It acts by transphosphatidylation, releasing exclusively cyclic phosphate products as second products. Induces dermonecrosis, hemolysis, increased vascular permeability, edema, inflammatory response, and platelet aggregation. This Loxosceles sabina (Tucson recluse spider) protein is Dermonecrotic toxin LsaSicTox-alphaIB1aii.